The chain runs to 191 residues: Ribosome maturation factor RimM (191 aa).

The PRC barrel domain occupies 102–185; that stretch reads EEEYHVSQLI…RIEINPPKGL (84 aa).

This sequence belongs to the RimM family. As to quaternary structure, binds ribosomal protein uS19.

Its subcellular location is the cytoplasm. In terms of biological role, an accessory protein needed during the final step in the assembly of 30S ribosomal subunit, possibly for assembly of the head region. Essential for efficient processing of 16S rRNA. May be needed both before and after RbfA during the maturation of 16S rRNA. It has affinity for free ribosomal 30S subunits but not for 70S ribosomes. The polypeptide is Ribosome maturation factor RimM (Crocosphaera subtropica (strain ATCC 51142 / BH68) (Cyanothece sp. (strain ATCC 51142))).